The sequence spans 486 residues: Galactose-1-phosphate uridylyltransferase (486 aa).

The protein belongs to the galactose-1-phosphate uridylyltransferase type 2 family.

It localises to the cytoplasm. The enzyme catalyses alpha-D-galactose 1-phosphate + UDP-alpha-D-glucose = alpha-D-glucose 1-phosphate + UDP-alpha-D-galactose. Its pathway is carbohydrate metabolism; galactose metabolism. The polypeptide is Galactose-1-phosphate uridylyltransferase (Lacticaseibacillus casei (Lactobacillus casei)).